A 237-amino-acid polypeptide reads, in one-letter code: Ribonuclease 3 (237 aa).

In terms of domain architecture, RNase III spans 8-134 (RSALLEKLGV…VIGAVYLDAG (127 aa)). E47 lines the Mg(2+) pocket. Residue D51 is part of the active site. Mg(2+)-binding residues include D120 and E123. E123 is a catalytic residue. Residues 161 to 229 (DPKTSLQEAA…ALSAWTALTN (69 aa)) enclose the DRBM domain.

It belongs to the ribonuclease III family. Homodimer. Requires Mg(2+) as cofactor.

Its subcellular location is the cytoplasm. The enzyme catalyses Endonucleolytic cleavage to 5'-phosphomonoester.. Functionally, digests double-stranded RNA. Involved in the processing of primary rRNA transcript to yield the immediate precursors to the large and small rRNAs (23S and 16S). Processes some mRNAs, and tRNAs when they are encoded in the rRNA operon. Processes pre-crRNA and tracrRNA of type II CRISPR loci if present in the organism. This chain is Ribonuclease 3, found in Leifsonia xyli subsp. xyli (strain CTCB07).